The following is a 228-amino-acid chain: Small ribosomal subunit protein uS3 (228 aa).

The region spanning 39–107 (VREYLQDKLK…PVHINIEEIR (69 aa)) is the KH type-2 domain.

The protein belongs to the universal ribosomal protein uS3 family. Part of the 30S ribosomal subunit. Forms a tight complex with proteins S10 and S14.

In terms of biological role, binds the lower part of the 30S subunit head. Binds mRNA in the 70S ribosome, positioning it for translation. The sequence is that of Small ribosomal subunit protein uS3 from Pseudomonas syringae pv. syringae (strain B728a).